We begin with the raw amino-acid sequence, 224 residues long: Deoxyguanosine kinase (224 aa).

Residue 8–16 participates in ATP binding; that stretch reads GPIGAGKSS. 3 residues coordinate substrate: Glu32, Tyr44, and Gln55. Asp78 acts as the Proton acceptor in catalysis. Residues Arg79, Asp84, and Glu149 each contribute to the substrate site.

This sequence belongs to the DCK/DGK family. Heterodimer of a deoxyadenosine (DAK) and a deoxyguanosine kinase (DGK).

It catalyses the reaction 2'-deoxyguanosine + ATP = dGMP + ADP + H(+). Functionally, DGK/DAK plays an essential role in generating the deoxyribonucleotide precursors, dGTP and dATP, for DNA metabolism. The protein is Deoxyguanosine kinase of Lactobacillus johnsonii (strain CNCM I-12250 / La1 / NCC 533).